A 135-amino-acid polypeptide reads, in one-letter code: Membrane-anchored ubiquitin-fold protein 4 (135 aa).

A disordered region spans residues 1–20 (MAEKEEGKVAAEGGAEAEAD). The Ubiquitin-like domain maps to 23 to 92 (VEVKFRLFDG…NDKNIAQCRA (70 aa)). Cys132 carries the post-translational modification Cysteine methyl ester. The S-geranylgeranyl cysteine moiety is linked to residue Cys132. Positions 133-135 (TIL) are cleaved as a propeptide — removed in mature form.

The protein resides in the cell membrane. In terms of biological role, may serve as docking site to facilitate the association of other proteins to the plasma membrane. This chain is Membrane-anchored ubiquitin-fold protein 4 (MUB4), found in Oryza sativa subsp. japonica (Rice).